The primary structure comprises 362 residues: MQFGCNVAEAFGLRRSGVVLLTDQSLRSMPLSQQKKVEIILDGMGRGSQAAQGLPSPITSLAFIRDSHHFLFLAVDEDQCLGILKGGIKHLFMLDSQNETHEMDAMCCLDFYTHETVQRRGIGTRLFRAMELHTHISAQGWAFDRPSPKLLAFLSKVYDMHDFKAQPNNFLMLDASIRLWGAEFKQYRRSKKHYIPDAYLLPETRESEYLGEAELTKRTLIRKSTAVIPQTKTTQSEDAPARALTADELLSKRSVVLPTASRTPSLPDQPQSVAAAYMNKRIEGAGPSFEQYMRDHYGAKSLIVPSEIQTSLNHSKDSVSQEDMIQRQRQLDRMAFTLAREANARGSIHNTVGRGVICGRRG.

An N-acetyltransferase domain is found at 1–177 (MQFGCNVAEA…NNFLMLDASI (177 aa)). Acetyl-CoA contacts are provided by residues 111 to 124 (FYTH…GIGT) and 147 to 156 (SPKLLAFLSK).

It belongs to the acetyltransferase ATAT1 family.

It carries out the reaction L-lysyl-[alpha-tubulin] + acetyl-CoA = N(6)-acetyl-L-lysyl-[alpha-tubulin] + CoA + H(+). Specifically acetylates 'Lys-40' in alpha-tubulin on the lumenal side of microtubules. Promotes microtubule destabilization and accelerates microtubule dynamics; this activity may be independent of acetylation activity. Acetylates alpha-tubulin with a slow enzymatic rate, due to a catalytic site that is not optimized for acetyl transfer. Enters the microtubule through each end and diffuses quickly throughout the lumen of microtubules. Acetylates only long/old microtubules because of its slow acetylation rate since it does not have time to act on dynamically unstable microtubules before the enzyme is released. This is Alpha-tubulin N-acetyltransferase from Giardia intestinalis (strain ATCC 50803 / WB clone C6) (Giardia lamblia).